We begin with the raw amino-acid sequence, 232 residues long: Large ribosomal subunit protein uL1 (232 aa).

This sequence belongs to the universal ribosomal protein uL1 family. Part of the 50S ribosomal subunit.

In terms of biological role, binds directly to 23S rRNA. The L1 stalk is quite mobile in the ribosome, and is involved in E site tRNA release. Protein L1 is also a translational repressor protein, it controls the translation of the L11 operon by binding to its mRNA. In Bartonella bacilliformis (strain ATCC 35685 / KC583 / Herrer 020/F12,63), this protein is Large ribosomal subunit protein uL1.